Consider the following 230-residue polypeptide: Probable cytokinin riboside 5'-monophosphate phosphoribohydrolase LOG4 (230 aa).

Residues E91, 109–110 (RK), and 126–132 (GYGTIEE) each bind substrate.

Belongs to the LOG family.

The catalysed reaction is N(6)-(dimethylallyl)adenosine 5'-phosphate + H2O = N(6)-dimethylallyladenine + D-ribose 5-phosphate. It carries out the reaction 9-ribosyl-trans-zeatin 5'-phosphate + H2O = trans-zeatin + D-ribose 5-phosphate. Functionally, cytokinin-activating enzyme working in the direct activation pathway. Phosphoribohydrolase that converts inactive cytokinin nucleotides to the biologically active free-base forms. This Oryza sativa subsp. japonica (Rice) protein is Probable cytokinin riboside 5'-monophosphate phosphoribohydrolase LOG4 (LOGL4).